Reading from the N-terminus, the 392-residue chain is Serine protease ea (392 aa).

The signal sequence occupies residues 1-19 (MLKPSIICLFLGILAKSSA). Positions 20 to 127 (GQFYFPNEAA…GQCGNILSNR (108 aa)) are cleaved as a propeptide — activation peptide. Positions 36 to 89 (RCITPNRERALCIHLEDCKYLYGLLTTTPLRDTDRLYLSRSQCGYTNGKVLICC) constitute a Clip domain. 3 cysteine pairs are disulfide-bonded: cysteine 37-cysteine 88, cysteine 47-cysteine 78, and cysteine 53-cysteine 89. An N-linked (GlcNAc...) asparagine glycan is attached at asparagine 107. 5 cysteine pairs are disulfide-bonded: cysteine 120/cysteine 260, cysteine 158/cysteine 174, cysteine 202/cysteine 212, cysteine 307/cysteine 324, and cysteine 334/cysteine 367. The Peptidase S1 domain occupies 128–391 (IYGGMKTKID…YVDWIQNTIE (264 aa)). The Charge relay system role is filled by histidine 173. 4 residues coordinate Ca(2+): glutamate 193, aspartate 195, threonine 198, and aspartate 201. Aspartate 240 (charge relay system) is an active-site residue. The active-site Charge relay system is the serine 338.

This sequence belongs to the peptidase S1 family. CLIP subfamily. Interacts with Spn27A; the two proteins are covalently linked leading to inhibition of ea catalytic activity. Interacts (via Peptidase domain) with snk (via N-terminal prodomain); leads to proteolytic activation of ea by snk. Sulfation of a vitelline membrane component by pip is required for proteolytic cleavage of ea by snk but not for the interaction of ea with snk. Proteolytically cleaved by snk. Activation peptide and active catalytic domain remain associated by a disulfide bond. Processed ea/easter is present in extremely low amounts in the early embryo as it is rapidly converted into a high molecular mass complex made up of ea covalently bound to the serpin Spn27A. Zymogen activation is also controlled by a negative feedback loop from Dorsal.

It localises to the secreted. Activated proteolytically by snk; activation requires both activation of the ndl-gd-snk protease cascade and sulfation of a vitelline membrane component by pip. Inhibited by binding of the serpin Spn27A. In terms of biological role, component of the extracellular signaling pathway that establishes the dorsal-ventral pathway of the embryo. A protease cascade involving ndl, gd, snk and ea results in activation of the spz Toll receptor ligand; acts downstream of ndl, gd and snk and is required for proteolytic processing of spz. Activation of ea requires both activation of the ndl-gd-snk protease cascade and sulfation of a vitelline membrane component by pip. Localized activation of the Toll receptor in the ventral region of the embryo defines cell identities along the dorsal-ventral continuum. In Drosophila melanogaster (Fruit fly), this protein is Serine protease ea.